Here is a 269-residue protein sequence, read N- to C-terminus: MWAIAGLISVLLAQAAAFDCSAKELEHYNFELLKGIHSVTSLKDTPPSQTNLTWYFGICEPIKEGLDACPQNSDVCGITSIILKGDSKNRVISEIVSFNTNLQKTYEPFSDSEIDSTGIAISYTGATWGDNSINAALRFVCPPKNNEHILDKFKLDSWDGKKLKASMYSKAACITSDKDKLKPPPKKPDNGESWGWFTWIFIFLVLFLSIYIVGGAWFQYNKGNAIDFSSALREVLDNFVELLKGIPAFSREIIEKFTSNSNRGEYSAV.

An N-terminal signal peptide occupies residues 1–17; it reads MWAIAGLISVLLAQAAA. The 158-residue stretch at 18–175 folds into the MRH domain; the sequence is FDCSAKELEH…SMYSKAACIT (158 aa). Over 18 to 193 the chain is Lumenal; that stretch reads FDCSAKELEH…PPKKPDNGES (176 aa). Disulfide bonds link C20–C59, C69–C76, and C141–C173. A helical transmembrane segment spans residues 194 to 214; it reads WGWFTWIFIFLVLFLSIYIVG. Residues 215–269 are Cytoplasmic-facing; it reads GAWFQYNKGNAIDFSSALREVLDNFVELLKGIPAFSREIIEKFTSNSNRGEYSAV.

The protein belongs to the ATG27 family.

Its subcellular location is the cytoplasmic vesicle membrane. It localises to the golgi apparatus membrane. The protein resides in the mitochondrion membrane. It is found in the preautophagosomal structure membrane. Functionally, effector of VPS34 phosphatidylinositol 3-phosphate kinase signaling. Regulates the cytoplasm to vacuole transport (Cvt) vesicle formation. Plays a role in ATG protein retrieval from the pre-autophagosomal structure (PAS) and is especially required for autophagy-dependent cycling of ATG9. This Scheffersomyces stipitis (strain ATCC 58785 / CBS 6054 / NBRC 10063 / NRRL Y-11545) (Yeast) protein is Autophagy-related protein 27 (ATG27).